The chain runs to 26 residues: Hemocyanin subunit 5 (26 aa).

It belongs to the tyrosinase family. Hemocyanin subfamily. Hemolymph.

It localises to the secreted. It is found in the extracellular space. Functionally, hemocyanins are copper-containing oxygen carriers occurring freely dissolved in the hemolymph of many mollusks and arthropods. This is Hemocyanin subunit 5 from Maja squinado (Mediterranean spider crab).